Reading from the N-terminus, the 141-residue chain is Protein C19orf12 homolog (141 aa).

A helical membrane pass occupies residues 37-57 (AVAFVGGLVGGPPGLAVGGAV).

The protein belongs to the C19orf12 family.

The protein localises to the mitochondrion. It is found in the mitochondrion membrane. It localises to the endoplasmic reticulum. The protein resides in the cytoplasm. Its subcellular location is the cytosol. The chain is Protein C19orf12 homolog from Bos taurus (Bovine).